Reading from the N-terminus, the 210-residue chain is Cell division protein SepF (210 aa).

The disordered stretch occupies residues 13 to 101 (GLADGDEYDE…EPVDPGYRAP (89 aa)). Basic and acidic residues-rich tracts occupy residues 22 to 70 (EQPR…ERPE) and 83 to 93 (VEPRRPARPEP).

The protein belongs to the SepF family. In terms of assembly, homodimer. Interacts with FtsZ.

It is found in the cytoplasm. Its function is as follows. Cell division protein that is part of the divisome complex and is recruited early to the Z-ring. Probably stimulates Z-ring formation, perhaps through the cross-linking of FtsZ protofilaments. Its function overlaps with FtsA. The protein is Cell division protein SepF of Micrococcus luteus (strain ATCC 4698 / DSM 20030 / JCM 1464 / CCM 169 / CCUG 5858 / IAM 1056 / NBRC 3333 / NCIMB 9278 / NCTC 2665 / VKM Ac-2230) (Micrococcus lysodeikticus).